A 260-amino-acid chain; its full sequence is Indole-3-glycerol phosphate synthase (260 aa).

It belongs to the TrpC family.

The catalysed reaction is 1-(2-carboxyphenylamino)-1-deoxy-D-ribulose 5-phosphate + H(+) = (1S,2R)-1-C-(indol-3-yl)glycerol 3-phosphate + CO2 + H2O. It functions in the pathway amino-acid biosynthesis; L-tryptophan biosynthesis; L-tryptophan from chorismate: step 4/5. This chain is Indole-3-glycerol phosphate synthase, found in Neisseria meningitidis serogroup C / serotype 2a (strain ATCC 700532 / DSM 15464 / FAM18).